A 60-amino-acid chain; its full sequence is LKCNRLIPPFWKTCPEGKNLCYKMTMRLAPKVPVKRGCIDVCPKSSLLIKYMCCNTNKCN.

Disulfide bonds link cysteine 3/cysteine 21, cysteine 14/cysteine 38, cysteine 42/cysteine 53, and cysteine 54/cysteine 59.

The protein belongs to the three-finger toxin family. Short-chain subfamily. Type IA cytotoxin sub-subfamily. As to quaternary structure, monomer in solution; Homodimer and oligomer in the presence of negatively charged lipids forming a pore with a size ranging between 20 and 30 Angstroms. As to expression, expressed by the venom gland.

The protein resides in the secreted. It localises to the target cell membrane. Functionally, shows cytolytic activity on many different cells by forming pore in lipid membranes. In vivo, increases heart rate or kills the animal by cardiac arrest. In addition, it binds to heparin with high affinity, interacts with Kv channel-interacting protein 1 (KCNIP1) in a calcium-independent manner, and binds to integrin alpha-V/beta-3 (ITGAV/ITGB3) with moderate affinity. In Naja mossambica (Mozambique spitting cobra), this protein is Cytotoxin 3.